We begin with the raw amino-acid sequence, 536 residues long: C-22 sterol desaturase ERG5A (536 aa).

The chain crosses the membrane as a helical span at residues 41-61 (VWTWVFTLVALCIAYDQIAYI). Residue C481 coordinates heme.

It belongs to the cytochrome P450 family. Heme serves as cofactor.

Its subcellular location is the endoplasmic reticulum membrane. The enzyme catalyses 5-dehydroepisterol + NADPH + O2 + H(+) = ergosta-5,7,22,24(28)-tetraen-3beta-ol + NADP(+) + 2 H2O. Its pathway is steroid metabolism; ergosterol biosynthesis. Functionally, C-22 sterol desaturase; part of the third module of ergosterol biosynthesis pathway that includes the late steps of the pathway. ERG5A and ERG5B convert 5-dehydroepisterol into ergosta-5,7,22,24(28)-tetraen-3beta-ol by forming the C-22(23) double bond in the sterol side chain. The third module or late pathway involves the ergosterol synthesis itself through consecutive reactions that mainly occur in the endoplasmic reticulum (ER) membrane. Firstly, the squalene synthase ERG9 catalyzes the condensation of 2 farnesyl pyrophosphate moieties to form squalene, which is the precursor of all steroids. Squalene synthase is crucial for balancing the incorporation of farnesyl diphosphate (FPP) into sterol and nonsterol isoprene synthesis. Secondly, squalene is converted into lanosterol by the consecutive action of the squalene epoxidase ERG1 and the lanosterol synthase ERG7. Then, the delta(24)-sterol C-methyltransferase ERG6 methylates lanosterol at C-24 to produce eburicol. Eburicol is the substrate of the sterol 14-alpha demethylase encoded by CYP51A, CYP51B and CYP51C, to yield 4,4,24-trimethyl ergosta-8,14,24(28)-trienol. CYP51B encodes the enzyme primarily responsible for sterol 14-alpha-demethylation, and plays an essential role in ascospore formation. CYP51A encodes an additional sterol 14-alpha-demethylase, induced on ergosterol depletion and responsible for the intrinsic variation in azole sensitivity. The third CYP51 isoform, CYP51C, does not encode a sterol 14-alpha-demethylase, but is required for full virulence on host wheat ears. The C-14 reductase ERG24 then reduces the C14=C15 double bond which leads to 4,4-dimethylfecosterol. A sequence of further demethylations at C-4, involving the C-4 demethylation complex containing the C-4 methylsterol oxidases ERG25, the sterol-4-alpha-carboxylate 3-dehydrogenase ERG26 and the 3-keto-steroid reductase ERG27, leads to the production of fecosterol via 4-methylfecosterol. ERG28 has a role as a scaffold to help anchor ERG25, ERG26 and ERG27 to the endoplasmic reticulum. The C-8 sterol isomerase ERG2 then catalyzes the reaction which results in unsaturation at C-7 in the B ring of sterols and thus converts fecosterol to episterol. The sterol-C5-desaturases ERG3A and ERG3BB then catalyze the introduction of a C-5 double bond in the B ring to produce 5-dehydroepisterol. The C-22 sterol desaturases ERG5A and ERG5B further convert 5-dehydroepisterol into ergosta-5,7,22,24(28)-tetraen-3beta-ol by forming the C-22(23) double bond in the sterol side chain. Finally, ergosta-5,7,22,24(28)-tetraen-3beta-ol is substrate of the C-24(28) sterol reductase ERG4 to produce ergosterol. The polypeptide is C-22 sterol desaturase ERG5A (Gibberella zeae (strain ATCC MYA-4620 / CBS 123657 / FGSC 9075 / NRRL 31084 / PH-1) (Wheat head blight fungus)).